The chain runs to 173 residues: Crossover junction endodeoxyribonuclease RuvC (173 aa).

Catalysis depends on residues D8, E69, and D141. 3 residues coordinate Mg(2+): D8, E69, and D141.

It belongs to the RuvC family. Homodimer which binds Holliday junction (HJ) DNA. The HJ becomes 2-fold symmetrical on binding to RuvC with unstacked arms; it has a different conformation from HJ DNA in complex with RuvA. In the full resolvosome a probable DNA-RuvA(4)-RuvB(12)-RuvC(2) complex forms which resolves the HJ. The cofactor is Mg(2+).

Its subcellular location is the cytoplasm. It catalyses the reaction Endonucleolytic cleavage at a junction such as a reciprocal single-stranded crossover between two homologous DNA duplexes (Holliday junction).. In terms of biological role, the RuvA-RuvB-RuvC complex processes Holliday junction (HJ) DNA during genetic recombination and DNA repair. Endonuclease that resolves HJ intermediates. Cleaves cruciform DNA by making single-stranded nicks across the HJ at symmetrical positions within the homologous arms, yielding a 5'-phosphate and a 3'-hydroxyl group; requires a central core of homology in the junction. The consensus cleavage sequence is 5'-(A/T)TT(C/G)-3'. Cleavage occurs on the 3'-side of the TT dinucleotide at the point of strand exchange. HJ branch migration catalyzed by RuvA-RuvB allows RuvC to scan DNA until it finds its consensus sequence, where it cleaves and resolves the cruciform DNA. The protein is Crossover junction endodeoxyribonuclease RuvC of Stenotrophomonas maltophilia (strain R551-3).